A 269-amino-acid polypeptide reads, in one-letter code: Thiazole synthase (269 aa).

K105 (schiff-base intermediate with DXP) is an active-site residue. Residues G166, 192-193 (AG), and 214-215 (NT) each bind 1-deoxy-D-xylulose 5-phosphate. The interval 245 to 269 (AMSAQDAAQPSTPVLGTPFWHHDHG) is disordered.

The protein belongs to the ThiG family. Homotetramer. Forms heterodimers with either ThiH or ThiS.

It is found in the cytoplasm. It carries out the reaction [ThiS sulfur-carrier protein]-C-terminal-Gly-aminoethanethioate + 2-iminoacetate + 1-deoxy-D-xylulose 5-phosphate = [ThiS sulfur-carrier protein]-C-terminal Gly-Gly + 2-[(2R,5Z)-2-carboxy-4-methylthiazol-5(2H)-ylidene]ethyl phosphate + 2 H2O + H(+). The protein operates within cofactor biosynthesis; thiamine diphosphate biosynthesis. Catalyzes the rearrangement of 1-deoxy-D-xylulose 5-phosphate (DXP) to produce the thiazole phosphate moiety of thiamine. Sulfur is provided by the thiocarboxylate moiety of the carrier protein ThiS. In vitro, sulfur can be provided by H(2)S. This chain is Thiazole synthase, found in Paracidovorax citrulli (strain AAC00-1) (Acidovorax citrulli).